A 186-amino-acid chain; its full sequence is MAETSSLISGVAQRYAGSLFEHALDANSVASVEKDLGRFEALLSGSEDLRRLISSPVFSSEDQLHAIGAIADKAGIKGLVGNFLRVVAQNRRLFALPGIIAAFRQIAAEHRGEISADVVSAHELTSAQQNELKATLKGVAGKDVTINVTVDPSILGGLIVKMGSRQIDTSLRTKLSSLKLALKEVG.

This sequence belongs to the ATPase delta chain family. F-type ATPases have 2 components, F(1) - the catalytic core - and F(0) - the membrane proton channel. F(1) has five subunits: alpha(3), beta(3), gamma(1), delta(1), epsilon(1). F(0) has three main subunits: a(1), b(2) and c(10-14). The alpha and beta chains form an alternating ring which encloses part of the gamma chain. F(1) is attached to F(0) by a central stalk formed by the gamma and epsilon chains, while a peripheral stalk is formed by the delta and b chains.

Its subcellular location is the cell inner membrane. F(1)F(0) ATP synthase produces ATP from ADP in the presence of a proton or sodium gradient. F-type ATPases consist of two structural domains, F(1) containing the extramembraneous catalytic core and F(0) containing the membrane proton channel, linked together by a central stalk and a peripheral stalk. During catalysis, ATP synthesis in the catalytic domain of F(1) is coupled via a rotary mechanism of the central stalk subunits to proton translocation. Its function is as follows. This protein is part of the stalk that links CF(0) to CF(1). It either transmits conformational changes from CF(0) to CF(1) or is implicated in proton conduction. This chain is ATP synthase subunit delta, found in Brucella abortus (strain S19).